The chain runs to 676 residues: Double-stranded RNA-specific editase Adar (676 aa).

Residues 1–51 (MKFDSRVMLNSANNNSPQHPVSAPSDINMNGYNRKLPQKRGYEMPKYSDPK) form a disordered region. Residues 8 to 31 (MLNSANNNSPQHPVSAPSDINMNG) are compositionally biased toward polar residues. Positions 40–51 (RGYEMPKYSDPK) are enriched in basic and acidic residues. 2 consecutive DRBM domains span residues 61-127 (QPKN…SFIQ) and 197-272 (ITVD…SLCN). The A to I editase domain occupies 348–672 (SVSTGTKCVS…LKKPIEQDEF (325 aa)). Position 372 (His372) interacts with Zn(2+). The Proton donor role is filled by Glu374. Residues Cys430 and Cys493 each coordinate Zn(2+).

Expressed in embryonic nervous system; late stage 13 sees ventral nerve cord expression which spreads to brain by stage 16. Expression is maintained through to adulthood.

Has A-to-I RNA editing activity on extended dsRNA: edits RNA-binding protein Rnp4F. A-to-I editing of pre-mRNAs acts predominantly through nervous system targets to affect adult nervous system integrity, function and behavior. Essential for adaptation to environmental stresses, such as oxygen deprivation, and for the prevention of premature neuronal degeneration, through the editing of ion channels as targets. This chain is Double-stranded RNA-specific editase Adar, found in Drosophila melanogaster (Fruit fly).